Consider the following 331-residue polypeptide: Peroxidase 60 (331 aa).

A signal peptide spans 1 to 26 (MAVKISTIEVLILSLALLSFGHGCYG). 4 disulfides stabilise this stretch: Cys37/Cys113, Cys70/Cys75, Cys119/Cys321, and Cys198/Cys230. His68 functions as the Proton acceptor in the catalytic mechanism. Residues Asp69, Gly74, Asp76, and Ser78 each contribute to the Ca(2+) site. Pro161 provides a ligand contact to substrate. Residue His191 coordinates heme b. Ca(2+) is bound at residue Thr192. Asn245 carries N-linked (GlcNAc...) asparagine glycosylation. Ser248 and Asp253 together coordinate Ca(2+).

This sequence belongs to the peroxidase family. Classical plant (class III) peroxidase subfamily. The cofactor is heme b. Requires Ca(2+) as cofactor. In terms of tissue distribution, expressed in roots, slightly in leaves.

Its subcellular location is the secreted. It catalyses the reaction 2 a phenolic donor + H2O2 = 2 a phenolic radical donor + 2 H2O. In terms of biological role, removal of H(2)O(2), oxidation of toxic reductants, biosynthesis and degradation of lignin, suberization, auxin catabolism, response to environmental stresses such as wounding, pathogen attack and oxidative stress. These functions might be dependent on each isozyme/isoform in each plant tissue. The sequence is that of Peroxidase 60 (PER60) from Arabidopsis thaliana (Mouse-ear cress).